Here is a 156-residue protein sequence, read N- to C-terminus: MGQTFEGHLVAEGLKVGIVVGRFNEFITSKLLGGAEDALRRHGASEADVDVAWVPGAFEIPFAAKKMAESGKYDAIITLGTVIRGSTPHFDYVCNEVAKGVGALNMSTGIPVIFGVLTTDTIEQAVERAGTKAGNKGWEAAAAAIEMANLSKELSK.

Residues F23, 57–59 (AFE), and 81–83 (TVI) each bind 5-amino-6-(D-ribitylamino)uracil. 86–87 (ST) is a binding site for (2S)-2-hydroxy-3-oxobutyl phosphate. H89 acts as the Proton donor in catalysis. Position 114 (F114) interacts with 5-amino-6-(D-ribitylamino)uracil. Residue R128 coordinates (2S)-2-hydroxy-3-oxobutyl phosphate.

This sequence belongs to the DMRL synthase family. As to quaternary structure, forms an icosahedral capsid composed of 60 subunits, arranged as a dodecamer of pentamers.

It catalyses the reaction (2S)-2-hydroxy-3-oxobutyl phosphate + 5-amino-6-(D-ribitylamino)uracil = 6,7-dimethyl-8-(1-D-ribityl)lumazine + phosphate + 2 H2O + H(+). The protein operates within cofactor biosynthesis; riboflavin biosynthesis; riboflavin from 2-hydroxy-3-oxobutyl phosphate and 5-amino-6-(D-ribitylamino)uracil: step 1/2. Catalyzes the formation of 6,7-dimethyl-8-ribityllumazine by condensation of 5-amino-6-(D-ribitylamino)uracil with 3,4-dihydroxy-2-butanone 4-phosphate. This is the penultimate step in the biosynthesis of riboflavin. The chain is 6,7-dimethyl-8-ribityllumazine synthase from Halalkalibacterium halodurans (strain ATCC BAA-125 / DSM 18197 / FERM 7344 / JCM 9153 / C-125) (Bacillus halodurans).